Here is a 449-residue protein sequence, read N- to C-terminus: Bifunctional protein GlmU (449 aa).

A pyrophosphorylase region spans residues 1 to 228; that stretch reads MSTALVILAA…EAETLGINSR (228 aa). UDP-N-acetyl-alpha-D-glucosamine-binding positions include 8–11, K22, Q75, 80–81, 103–105, G140, E154, N169, and N226; these read LAAG, GT, and YGD. D105 is a binding site for Mg(2+). N226 contributes to the Mg(2+) binding site. Residues 229–249 are linker; the sequence is ADLAAAEAVFQAHARAELLDI. The N-acetyltransferase stretch occupies residues 250–449; it reads GVTLTAPETV…RAKKAAKAKG (200 aa). Residues R315 and K333 each coordinate UDP-N-acetyl-alpha-D-glucosamine. The Proton acceptor role is filled by H345. Positions 348 and 359 each coordinate UDP-N-acetyl-alpha-D-glucosamine. Acetyl-CoA-binding positions include A362, 368-369, S387, T405, and R422; that span reads NY.

It in the N-terminal section; belongs to the N-acetylglucosamine-1-phosphate uridyltransferase family. This sequence in the C-terminal section; belongs to the transferase hexapeptide repeat family. In terms of assembly, homotrimer. Mg(2+) is required as a cofactor.

It localises to the cytoplasm. It carries out the reaction alpha-D-glucosamine 1-phosphate + acetyl-CoA = N-acetyl-alpha-D-glucosamine 1-phosphate + CoA + H(+). It catalyses the reaction N-acetyl-alpha-D-glucosamine 1-phosphate + UTP + H(+) = UDP-N-acetyl-alpha-D-glucosamine + diphosphate. Its pathway is nucleotide-sugar biosynthesis; UDP-N-acetyl-alpha-D-glucosamine biosynthesis; N-acetyl-alpha-D-glucosamine 1-phosphate from alpha-D-glucosamine 6-phosphate (route II): step 2/2. The protein operates within nucleotide-sugar biosynthesis; UDP-N-acetyl-alpha-D-glucosamine biosynthesis; UDP-N-acetyl-alpha-D-glucosamine from N-acetyl-alpha-D-glucosamine 1-phosphate: step 1/1. It functions in the pathway bacterial outer membrane biogenesis; LPS lipid A biosynthesis. In terms of biological role, catalyzes the last two sequential reactions in the de novo biosynthetic pathway for UDP-N-acetylglucosamine (UDP-GlcNAc). The C-terminal domain catalyzes the transfer of acetyl group from acetyl coenzyme A to glucosamine-1-phosphate (GlcN-1-P) to produce N-acetylglucosamine-1-phosphate (GlcNAc-1-P), which is converted into UDP-GlcNAc by the transfer of uridine 5-monophosphate (from uridine 5-triphosphate), a reaction catalyzed by the N-terminal domain. The chain is Bifunctional protein GlmU from Ruegeria sp. (strain TM1040) (Silicibacter sp.).